We begin with the raw amino-acid sequence, 303 residues long: Olfactory receptor 4X2 (303 aa).

Over 1–17 (MTEFIFLVLSPNQEVQR) the chain is Extracellular. A helical membrane pass occupies residues 18–41 (VCFVIFLFLYTAIVLGNFLIVLTV). Residues 42 to 49 (MTSRSLGS) are Cytoplasmic-facing. The helical transmembrane segment at 50 to 71 (PMYFFLSYLSFMEICYSSATAP) threads the bilayer. Topologically, residues 72–92 (KLISDLLAERKVISWWGCMAQ) are extracellular. Cys-89 and Cys-181 are joined by a disulfide. A helical transmembrane segment spans residues 93 to 112 (LFFLHFFGGTEIFLLTVMAY). The Cytoplasmic portion of the chain corresponds to 113–131 (DHYVAICKPLSYTTIMNWQ). The chain crosses the membrane as a helical span at residues 132-150 (VCTVLVGIAWVGGFMHSFA). Over 151–187 (QILLIFHLLFCGPNVINHYFCDLVPLLKLACSDTFLI) the chain is Extracellular. Residues 188 to 211 (GLLIVANGGTLSVISFGVLLASYM) traverse the membrane as a helical segment. Topologically, residues 212–227 (VILLHLRTWSSEGWCK) are cytoplasmic. The chain crosses the membrane as a helical span at residues 228–250 (ALSTCGSHFAVVILFFGPCVFNS). The Extracellular segment spans residues 251 to 261 (LRPSTTLPIDK). A helical transmembrane segment spans residues 262-281 (MVAVFYTVITAILNPVIYSL). Residues 282–303 (RNAEMRKAMKRLWIRTLRLNEK) are Cytoplasmic-facing.

It belongs to the G-protein coupled receptor 1 family.

Its subcellular location is the cell membrane. Its function is as follows. Odorant receptor. The sequence is that of Olfactory receptor 4X2 (OR4X2) from Homo sapiens (Human).